A 140-amino-acid polypeptide reads, in one-letter code: Nucleoside diphosphate kinase (140 aa).

Lys11, Phe59, Arg87, Thr93, Arg104, and Asn114 together coordinate ATP. His117 acts as the Pros-phosphohistidine intermediate in catalysis.

The protein belongs to the NDK family. Homotetramer. Mg(2+) serves as cofactor.

The protein resides in the cytoplasm. It catalyses the reaction a 2'-deoxyribonucleoside 5'-diphosphate + ATP = a 2'-deoxyribonucleoside 5'-triphosphate + ADP. The catalysed reaction is a ribonucleoside 5'-diphosphate + ATP = a ribonucleoside 5'-triphosphate + ADP. Its function is as follows. Major role in the synthesis of nucleoside triphosphates other than ATP. The ATP gamma phosphate is transferred to the NDP beta phosphate via a ping-pong mechanism, using a phosphorylated active-site intermediate. The protein is Nucleoside diphosphate kinase of Rhizobium johnstonii (strain DSM 114642 / LMG 32736 / 3841) (Rhizobium leguminosarum bv. viciae).